Here is a 258-residue protein sequence, read N- to C-terminus: Phosphate import ATP-binding protein PstB (258 aa).

An ABC transporter domain is found at 13–253 (IEVENLNLWY…PKEQSTEDYI (241 aa)). 45–52 (GPSGCGKS) contacts ATP.

Belongs to the ABC transporter superfamily. Phosphate importer (TC 3.A.1.7) family. The complex is composed of two ATP-binding proteins (PstB), two transmembrane proteins (PstC and PstA) and a solute-binding protein (PstS).

Its subcellular location is the cell membrane. The catalysed reaction is phosphate(out) + ATP + H2O = ADP + 2 phosphate(in) + H(+). Part of the ABC transporter complex PstSACB involved in phosphate import. Responsible for energy coupling to the transport system. This chain is Phosphate import ATP-binding protein PstB, found in Methanosarcina acetivorans (strain ATCC 35395 / DSM 2834 / JCM 12185 / C2A).